The primary structure comprises 485 residues: MRRSTTISIASKANKFLNLCLLQKGNPVIVPFISRFWGRTFSTKRSSMNLEEEIDLFCKMIQSRPLPSIVDFSKVLSKIAKSKNYDLVISLFHHMEVCGIGHDLYSYNIVINCLCRCSRFVIALSVVGKMMKFGYEPDVVTVSSLINGFCQGNRVFDAIDLVSKMEEMGFRPDVVIYNTIIDGSCKIGLVNDAVELFDRMERDGVRADAVTYNSLVAGLCCSGRWSDAARLMRDMVMRDIVPNVITFTAVIDVFVKEGKFSEAMKLYEEMTRRCVDPDVFTYNSLINGLCMHGRVDEAKQMLDLMVTKGCLPDVVTYNTLINGFCKSKRVDEGTKLFREMAQRGLVGDTITYNTIIQGYFQAGRPDAAQEIFSRMDSRPNIRTYSILLYGLCMNWRVEKALVLFENMQKSEIELDITTYNIVIHGMCKIGNVEDAWDLFRSLSCKGLKPDVVSYTTMISGFCRKRQWDKSDLLYRKMQEDGLLPL.

PPR repeat units lie at residues 68–102 (SIVD…GIGH), 103–137 (DLYS…GYEP), 138–172 (DVVT…GFRP), 173–207 (DVVI…GVRA), 208–242 (DAVT…DIVP), 243–277 (NVIT…CVDP), 278–312 (DVFT…GCLP), 313–347 (DVVT…GLVG), 348–378 (DTIT…MDSR), 380–414 (NIRT…EIEL), 415–449 (DITT…GLKP), and 450–484 (DVVS…GLLP).

It belongs to the PPR family. P subfamily.

This is Pentatricopeptide repeat-containing protein At1g62720 from Arabidopsis thaliana (Mouse-ear cress).